We begin with the raw amino-acid sequence, 300 residues long: Cation-efflux pump FieF (300 aa).

4 consecutive transmembrane segments (helical) span residues 12–32 (AALSATALASILLIIKIFAWW), 40–60 (LAALVDSLVDLAASLTNLFVV), 82–102 (AALAQSMFISGSALFLFLTGF), and 114–134 (PSIGIGVTLVALFSTLILVTF). D45 and D49 together coordinate Zn(2+). Residues H153 and D157 each coordinate Zn(2+). 2 helical membrane passes run 155–175 (QSDVLMNGAILIALALSWYGF) and 178–198 (ADALFALGIGVYILYSALRMG).

Belongs to the cation diffusion facilitator (CDF) transporter (TC 2.A.4) family. FieF subfamily. As to quaternary structure, homodimer.

The protein resides in the cell inner membrane. The enzyme catalyses Zn(2+)(in) + H(+)(out) = Zn(2+)(out) + H(+)(in). It carries out the reaction Cd(2+)(in) + H(+)(out) = Cd(2+)(out) + H(+)(in). It catalyses the reaction Fe(2+)(in) + H(+)(out) = Fe(2+)(out) + H(+)(in). Divalent metal cation transporter which exports Zn(2+), Cd(2+) and possibly Fe(2+). May be involved in zinc and iron detoxification by efflux. This is Cation-efflux pump FieF from Yersinia pestis bv. Antiqua (strain Antiqua).